The chain runs to 125 residues: Large ribosomal subunit protein bL12 (125 aa).

It belongs to the bacterial ribosomal protein bL12 family. As to quaternary structure, homodimer. Part of the ribosomal stalk of the 50S ribosomal subunit. Forms a multimeric L10(L12)X complex, where L10 forms an elongated spine to which 2 to 4 L12 dimers bind in a sequential fashion. Binds GTP-bound translation factors.

Forms part of the ribosomal stalk which helps the ribosome interact with GTP-bound translation factors. Is thus essential for accurate translation. The sequence is that of Large ribosomal subunit protein bL12 from Azoarcus sp. (strain BH72).